A 240-amino-acid chain; its full sequence is Dihydromonapterin reductase (240 aa).

Tyr152 functions as the Proton acceptor in the catalytic mechanism.

Belongs to the short-chain dehydrogenases/reductases (SDR) family. FolM subfamily.

The catalysed reaction is (6S)-5,6,7,8-tetrahydrofolate + NADP(+) = 7,8-dihydrofolate + NADPH + H(+). It carries out the reaction 7,8-dihydromonapterin + NADPH + H(+) = 5,6,7,8-tetrahydromonapterin + NADP(+). Catalyzes the reduction of dihydromonapterin to tetrahydromonapterin. Also has lower activity with dihydrofolate. The chain is Dihydromonapterin reductase (folM) from Shigella flexneri serotype 5b (strain 8401).